The sequence spans 154 residues: Small ribosomal subunit protein uS9 (154 aa).

The segment at 133-154 is disordered; it reads RAKESKKYGLKKARKAPQYSKR. Residues 140–154 are compositionally biased toward basic residues; sequence YGLKKARKAPQYSKR.

This sequence belongs to the universal ribosomal protein uS9 family.

The polypeptide is Small ribosomal subunit protein uS9 (Salinispora tropica (strain ATCC BAA-916 / DSM 44818 / JCM 13857 / NBRC 105044 / CNB-440)).